A 430-amino-acid chain; its full sequence is L-lysine N6-monooxygenase MbtG (430 aa).

The first 21 residues, 1–21 (MTATLAVIGAGPKAVAVAAKA), serve as a signal peptide directing secretion.

Belongs to the lysine N(6)-hydroxylase/L-ornithine N(5)-oxygenase family. It depends on FAD as a cofactor.

The enzyme catalyses L-lysine + NADPH + O2 = N(6)-hydroxy-L-lysine + NADP(+) + H2O. It participates in siderophore biosynthesis; mycobactin biosynthesis. Functionally, flavoprotein monooxygenase required for N-hydroxylation of the two acylated lysine residues during mycobactin assembly, thus producing the hydroxamate groups necessary for iron sequestration. Is also able, but less efficiently, to hydroxylate L-lysine (non acylated) in vitro. The chain is L-lysine N6-monooxygenase MbtG (mbtG) from Mycobacterium sp. (strain MCS).